We begin with the raw amino-acid sequence, 297 residues long: Polyamine aminopropyltransferase 2 (297 aa).

The PABS domain maps to 26 to 258; that stretch reads FYWEPDVEGG…DLWTFFVALK (233 aa). Gln53 contributes to the S-methyl-5'-thioadenosine binding site. Spermidine-binding residues include His84 and Glu108. S-methyl-5'-thioadenosine contacts are provided by residues Asp128 and 157–158; that span reads DV. The active-site Proton acceptor is Asp176. An S-methyl-5'-thioadenosine-binding site is contributed by Pro184.

This sequence belongs to the spermidine/spermine synthase family. In terms of assembly, homodimer or homotetramer.

The protein resides in the cytoplasm. The enzyme catalyses S-adenosyl 3-(methylsulfanyl)propylamine + putrescine = S-methyl-5'-thioadenosine + spermidine + H(+). It participates in amine and polyamine biosynthesis; spermidine biosynthesis; spermidine from putrescine: step 1/1. Functionally, catalyzes the irreversible transfer of a propylamine group from the amino donor S-adenosylmethioninamine (decarboxy-AdoMet) to putrescine (1,4-diaminobutane) to yield spermidine. This is Polyamine aminopropyltransferase 2 from Caldanaerobacter subterraneus subsp. tengcongensis (strain DSM 15242 / JCM 11007 / NBRC 100824 / MB4) (Thermoanaerobacter tengcongensis).